Here is a 196-residue protein sequence, read N- to C-terminus: Large ribosomal subunit protein uL10 (196 aa).

The tract at residues 163-196 is disordered; the sequence is GAPAAAEAPAAEEAPAAEAAETEAPAEAAATEEN. The span at 164-196 shows a compositional bias: low complexity; that stretch reads APAAAEAPAAEEAPAAEAAETEAPAEAAATEEN.

This sequence belongs to the universal ribosomal protein uL10 family. In terms of assembly, part of the ribosomal stalk of the 50S ribosomal subunit. The N-terminus interacts with L11 and the large rRNA to form the base of the stalk. The C-terminus forms an elongated spine to which L12 dimers bind in a sequential fashion forming a multimeric L10(L12)X complex.

Forms part of the ribosomal stalk, playing a central role in the interaction of the ribosome with GTP-bound translation factors. This Arthrobacter sp. (strain FB24) protein is Large ribosomal subunit protein uL10.